The primary structure comprises 433 residues: Pseudopaline synthase (433 aa).

Residues 7–27 (SLGNVLLVGLGAVAIQVALDL) form a helical membrane-spanning segment. Residues 16 to 19 (LGAV), 39 to 40 (NH), and T154 each bind NAD(+). H219 acts as the Proton donor/acceptor in catalysis. An NAD(+)-binding site is contributed by E364.

This sequence belongs to the staphylopine dehydrogenase family. As to quaternary structure, homodimer. Interacts with CntL.

It localises to the cell membrane. The catalysed reaction is pseudopaline + NAD(+) + H2O = (2S)-2-amino-4-{[(1S)-1-carboxy-2-(1H-imidazol-4-yl)ethyl]amino}butanoate + 2-oxoglutarate + NADH + H(+). Its function is as follows. Catalyzes the NADH-dependent reductive condensation of alpha-ketoglutarate to the intermediate formed by the adjacently encoded enzyme CntL, namely (2S)-2-amino-4-{[(1S)-1-carboxy-2-(1H-imidazol-4-yl)ethyl]amino}butanoate, leading to the production of pseudopaline. This is the last step in the biosynthesis of the metallophore pseudopaline, which is involved in the acquisition of nickel and zinc, and thus enables bacterial growth inside the host, where metal access is limited. Therefore, this enzyme probably contributes to Pseudomonas virulence. Can use neither pyruvate nor NADPH in place of alpha-ketoglutarate and NADH, respectively. The sequence is that of Pseudopaline synthase from Pseudomonas aeruginosa (strain UCBPP-PA14).